A 134-amino-acid chain; its full sequence is Large ribosomal subunit protein bL20 (134 aa).

This sequence belongs to the bacterial ribosomal protein bL20 family.

Binds directly to 23S ribosomal RNA and is necessary for the in vitro assembly process of the 50S ribosomal subunit. It is not involved in the protein synthesizing functions of that subunit. In Sinorhizobium medicae (strain WSM419) (Ensifer medicae), this protein is Large ribosomal subunit protein bL20.